Consider the following 607-residue polypeptide: MVRHQPLQYYEPQLCLSCLTGIYGCRWKRYQRSHDDTTPWERLWFLLLVCTFSLTLTWLYFWWGVHNDYDEFNWYLYNRMGYWSDWSVPILVTSAAAFTYIAGLLVLALCHIAVGQQLNLHWIHKMGLVVILASTVVAMSAVAQLWEDEWEVLLISLQGTAPFLHIGALVAITALSWIVAGQFARAERSSSQLTILCTFFAVVFTFYLIPLTISSPCIMEKKDLGPKPALIGHRGAPMLAPEHTVMSFRKALEQRLYGLQADITISLDGVPFLMHDTTLRRTTNVEHLFPELARRPAAMLNWTVLQRLNAGQWFLKTDPFWTASSLSPSDHREVQNQSICSLAELLELAKGNASLLLNLRDPPRDHPYRGSFLNVTLEAVLRSGFPQHQVMWLFNRQRPLVRKMAPGFQQTSGSKEAIANLRKGHIQKLNLRYTQVSHQELRDYASWNLSVNLYTVNAPWLFSLLWCAGVPSVTSDNSHTLSRVPSPLWIMPPDEYCLMWVTADLISFSLIIGIFVLQKWRLGGIRSYNPEQIMLSAAVRRTSRDVSIMKEKLIFSEISDGVEVSDELSVCSDSSYDTYANANSTATPVGPRNAGSRAKTVTEQSGH.

The Cytoplasmic portion of the chain corresponds to 1–42; it reads MVRHQPLQYYEPQLCLSCLTGIYGCRWKRYQRSHDDTTPWER. 2 disulfides stabilise this stretch: Cys15-Cys18 and Cys25-Cys571. Residues 43–63 form a helical membrane-spanning segment; sequence LWFLLLVCTFSLTLTWLYFWW. The Extracellular portion of the chain corresponds to 64-89; that stretch reads GVHNDYDEFNWYLYNRMGYWSDWSVP. Residues 90–110 traverse the membrane as a helical segment; it reads ILVTSAAAFTYIAGLLVLALC. Topologically, residues 111–125 are cytoplasmic; the sequence is HIAVGQQLNLHWIHK. A helical transmembrane segment spans residues 126–146; that stretch reads MGLVVILASTVVAMSAVAQLW. At 147–160 the chain is on the extracellular side; the sequence is EDEWEVLLISLQGT. Residues 161 to 181 traverse the membrane as a helical segment; it reads APFLHIGALVAITALSWIVAG. Over 182 to 192 the chain is Cytoplasmic; that stretch reads QFARAERSSSQ. A helical transmembrane segment spans residues 193 to 213; it reads LTILCTFFAVVFTFYLIPLTI. Residues 214–496 are Extracellular-facing; the sequence is SSPCIMEKKD…PLWIMPPDEY (283 aa). The GP-PDE domain occupies 228–485; that stretch reads PALIGHRGAP…DNSHTLSRVP (258 aa). 5 N-linked (GlcNAc...) asparagine glycosylation sites follow: Asn301, Asn336, Asn352, Asn374, and Asn448. A helical membrane pass occupies residues 497–517; that stretch reads CLMWVTADLISFSLIIGIFVL. Over 518 to 607 the chain is Cytoplasmic; the sequence is QKWRLGGIRS…AKTVTEQSGH (90 aa). The segment at 582 to 607 is disordered; the sequence is ANSTATPVGPRNAGSRAKTVTEQSGH.

The protein belongs to the glycerophosphoryl diester phosphodiesterase family. In terms of assembly, interacts with PRDX1; forms a mixed-disulfide with PRDX1, leading to disrupt intramolecular disulfide bond between Cys-25 and Cys-571. Post-translationally, intramolecular disulfide bond between Cys-25 and Cys-571 is reduced by PRDX1. As to expression, detected in brain, lung, heart, kidney and testis.

Its subcellular location is the endomembrane system. The protein localises to the cytoplasm. It is found in the perinuclear region. The protein resides in the cell projection. It localises to the growth cone. It carries out the reaction a 1,2-diacyl-sn-glycero-3-phospho-(1D-myo-inositol-4,5-bisphosphate) + H2O = 1D-myo-inositol 1,4,5-trisphosphate + a 1,2-diacyl-sn-glycerol + H(+). It catalyses the reaction sn-glycerol 3-phosphocholine + H2O = sn-glycerol 3-phosphate + choline + H(+). With respect to regulation, inhibited by high level of NaCl or urea. Glycerophosphodiester phosphodiesterase that promotes neurite formation and drives spinal motor neuron differentiation. Mediates the cleavage of glycosylphosphatidylinositol (GPI) anchor of target proteins: removes the GPI-anchor of RECK, leading to release RECK from the plasma membrane. May contribute to the osmotic regulation of cellular glycerophosphocholine. This chain is Glycerophosphodiester phosphodiesterase domain-containing protein 5, found in Mus musculus (Mouse).